The following is a 310-amino-acid chain: Aspartate carbamoyltransferase catalytic subunit (310 aa).

Arg-58 and Thr-59 together coordinate carbamoyl phosphate. Lys-86 is an L-aspartate binding site. Carbamoyl phosphate contacts are provided by Arg-108, His-136, and Gln-139. L-aspartate contacts are provided by Arg-169 and Arg-224. 2 residues coordinate carbamoyl phosphate: Gly-265 and Pro-266.

It belongs to the aspartate/ornithine carbamoyltransferase superfamily. ATCase family. Heterododecamer (2C3:3R2) of six catalytic PyrB chains organized as two trimers (C3), and six regulatory PyrI chains organized as three dimers (R2).

The catalysed reaction is carbamoyl phosphate + L-aspartate = N-carbamoyl-L-aspartate + phosphate + H(+). It functions in the pathway pyrimidine metabolism; UMP biosynthesis via de novo pathway; (S)-dihydroorotate from bicarbonate: step 2/3. In terms of biological role, catalyzes the condensation of carbamoyl phosphate and aspartate to form carbamoyl aspartate and inorganic phosphate, the committed step in the de novo pyrimidine nucleotide biosynthesis pathway. The polypeptide is Aspartate carbamoyltransferase catalytic subunit (Trichlorobacter lovleyi (strain ATCC BAA-1151 / DSM 17278 / SZ) (Geobacter lovleyi)).